Here is a 159-residue protein sequence, read N- to C-terminus: Large ribosomal subunit protein uL10 (159 aa).

The protein belongs to the universal ribosomal protein uL10 family. As to quaternary structure, part of the ribosomal stalk of the 50S ribosomal subunit. The N-terminus interacts with L11 and the large rRNA to form the base of the stalk. The C-terminus forms an elongated spine to which L12 dimers bind in a sequential fashion forming a multimeric L10(L12)X complex.

Functionally, forms part of the ribosomal stalk, playing a central role in the interaction of the ribosome with GTP-bound translation factors. This chain is Large ribosomal subunit protein uL10, found in Campylobacter lari (strain RM2100 / D67 / ATCC BAA-1060).